The chain runs to 207 residues: Na(+)-translocating NADH-quinone reductase subunit D (207 aa).

A run of 6 helical transmembrane segments spans residues 20–40 (IALQ…LQTA), 41–61 (FVMA…ISMI), 69–89 (IRII…DQIL), 102–122 (VFVG…AFAM), 130–150 (FVDG…VAFL), and 177–197 (NGLF…IWAI).

Belongs to the NqrDE/RnfAE family. In terms of assembly, composed of six subunits; NqrA, NqrB, NqrC, NqrD, NqrE and NqrF.

It is found in the cell inner membrane. It carries out the reaction a ubiquinone + n Na(+)(in) + NADH + H(+) = a ubiquinol + n Na(+)(out) + NAD(+). In terms of biological role, NQR complex catalyzes the reduction of ubiquinone-1 to ubiquinol by two successive reactions, coupled with the transport of Na(+) ions from the cytoplasm to the periplasm. NqrA to NqrE are probably involved in the second step, the conversion of ubisemiquinone to ubiquinol. This is Na(+)-translocating NADH-quinone reductase subunit D from Haemophilus ducreyi (strain 35000HP / ATCC 700724).